We begin with the raw amino-acid sequence, 512 residues long: MEELKALRLKEKILEIELNSVKMQIHAYEESLKATTVNSVQEGEILQTESIPECPAQGKETPNPVKADSLLKTILGNERQNPLEGKSSKLVNLTPKSDKDKVKSSPVANGSGKDSTNPLNPVALGKSKMTILGQKQADEEEFKPDYLRAASNGQSWFAVYKGPNKEFFTEWEIVADICKKRQKSKRFRSKEQAEVSISLYNKDIQDPVNFLRPVKLVKEERAAQPLKFKAIAAEQTIQFDEFRQIWEKSRLSDLEDGVQEKFYTNDSASKSTYTFVENAEPYLVHTAFRAGLAKVIYPSPNLQELKWFPEGIVKAIKNFRKKVLNAKDAAIFIKIFSSIPDWVQSTRYEPYHFIQIGIAKTKKELPSSKVCKEEFSVQSLNKVRVQSLQTISQKLQEINEESSIKVNYCSSTCIMVSKFQKKTSTEDLKLVGIFESNLVNIEQLACGDQTKKEWCRIVRRTYQKHLCLYCKDKADSSSTSGEQNNVEKSCPDSPLTNAYDERSDDHKRIPSI.

Disordered stretches follow at residues 76-123 and 474-512; these read GNER…NPVA and ADSSSTSGEQNNVEKSCPDSPLTNAYDERSDDHKRIPSI. A compositionally biased stretch (polar residues) spans 476 to 487; sequence SSSTSGEQNNVE. The span at 499–512 shows a compositional bias: basic and acidic residues; it reads YDERSDDHKRIPSI.

It belongs to the caulimoviridae viroplasmin family.

It is found in the host cytoplasm. Functionally, enhances the translation of downstream ORFs on polycistronic mRNAs derived from figwort mosaic virus. The protein is Transactivator/viroplasmin protein of Figwort mosaic virus (strain DxS) (FMV).